A 266-amino-acid chain; its full sequence is Dihydropteroate synthase (266 aa).

A Pterin-binding domain is found at 12 to 260 (AAIMGILNVT…DVKANQDIVA (249 aa)). N19 provides a ligand contact to Mg(2+). (7,8-dihydropterin-6-yl)methyl diphosphate-binding positions include T59, D93, N112, D176, K212, and 248–250 (RVH).

Belongs to the DHPS family. Homodimer or homotrimer. Requires Mg(2+) as cofactor.

The catalysed reaction is (7,8-dihydropterin-6-yl)methyl diphosphate + 4-aminobenzoate = 7,8-dihydropteroate + diphosphate. It participates in cofactor biosynthesis; tetrahydrofolate biosynthesis; 7,8-dihydrofolate from 2-amino-4-hydroxy-6-hydroxymethyl-7,8-dihydropteridine diphosphate and 4-aminobenzoate: step 1/2. Functionally, catalyzes the condensation of para-aminobenzoate (pABA) with 6-hydroxymethyl-7,8-dihydropterin diphosphate (DHPt-PP) to form 7,8-dihydropteroate (H2Pte), the immediate precursor of folate derivatives. In Streptococcus pyogenes serotype M3 (strain ATCC BAA-595 / MGAS315), this protein is Dihydropteroate synthase (folP).